Here is a 433-residue protein sequence, read N- to C-terminus: C2H2 type master regulator of conidiophore development brlA (433 aa).

2 disordered regions span residues 23–64 and 240–265; these read PSEC…SHYH and KTHT…PVSR. A compositionally biased stretch (low complexity) spans 30–48; that stretch reads TSSFSPLDSPTPTPTSLYS. A compositionally biased stretch (polar residues) spans 240–264; it reads KTHTPSTPHRSVSMGTPSGSDTPVS. 2 consecutive C2H2-type zinc fingers follow at residues 321–345 and 351–376; these read FKCK…MKSH and HVCW…TKTH. The interval 391–416 is disordered; the sequence is ETSQDFDPDFRGQLTPDGRPIYGSKL.

Its subcellular location is the nucleus. Its function is as follows. BrlA, abaA and wetA are pivotal regulators of conidiophore development and conidium maturation. They act individually and together to regulate their own expression and that of numerous other sporulation-specific genes. Binds promoters of target genes at brlA response elements (BREs) containing the conserved sequence 5'-(C/A)(A/G)AGGG(G/A)-3'. Is not required for penicillin V production. This Penicillium rubens (strain ATCC 28089 / DSM 1075 / NRRL 1951 / Wisconsin 54-1255) (Penicillium chrysogenum) protein is C2H2 type master regulator of conidiophore development brlA.